The chain runs to 245 residues: Large ribosomal subunit protein uL4 (245 aa).

The segment covering 1–13 (MSRVATSDPSVTA) has biased composition (polar residues). Disordered stretches follow at residues 1–28 (MSRV…EGGS), 56–114 (ARQG…QRTP), and 224–245 (TSTA…EENK). Over residues 59–71 (GTHDTKTRGEVRG) the composition is skewed to basic and acidic residues. Positions 72 to 83 (GGRKPYRQKGTG) are enriched in basic residues.

The protein belongs to the universal ribosomal protein uL4 family. In terms of assembly, part of the 50S ribosomal subunit.

One of the primary rRNA binding proteins, this protein initially binds near the 5'-end of the 23S rRNA. It is important during the early stages of 50S assembly. It makes multiple contacts with different domains of the 23S rRNA in the assembled 50S subunit and ribosome. Functionally, forms part of the polypeptide exit tunnel. The chain is Large ribosomal subunit protein uL4 from Frankia casuarinae (strain DSM 45818 / CECT 9043 / HFP020203 / CcI3).